A 340-amino-acid chain; its full sequence is Porphobilinogen deaminase (340 aa).

An S-(dipyrrolylmethanemethyl)cysteine modification is found at C258.

Belongs to the HMBS family. The cofactor is dipyrromethane.

The catalysed reaction is 4 porphobilinogen + H2O = hydroxymethylbilane + 4 NH4(+). The protein operates within porphyrin-containing compound metabolism; protoporphyrin-IX biosynthesis; coproporphyrinogen-III from 5-aminolevulinate: step 2/4. Tetrapolymerization of the monopyrrole PBG into the hydroxymethylbilane pre-uroporphyrinogen in several discrete steps. The protein is Porphobilinogen deaminase (HEM3) of Candida albicans (strain SC5314 / ATCC MYA-2876) (Yeast).